The primary structure comprises 33 residues: Brevinin-2Ea (33 aa).

A disulfide bridge connects residues C27 and C33.

It belongs to the frog skin active peptide (FSAP) family. Brevinin subfamily. Expressed by the skin glands.

The protein localises to the secreted. Functionally, shows antibacterial activity against representative Gram-negative and Gram-positive bacterial species, and hemolytic activity. This chain is Brevinin-2Ea, found in Pelophylax lessonae (Pool frog).